A 201-amino-acid chain; its full sequence is Recombination protein RecR (201 aa).

Residues 57 to 72 (CADCRTFTEQEKCNIC) form a C4-type zinc finger. A Toprim domain is found at 81-176 (GQICVVESPA…DASRIAHGVP (96 aa)).

Belongs to the RecR family.

In terms of biological role, may play a role in DNA repair. It seems to be involved in an RecBC-independent recombinational process of DNA repair. It may act with RecF and RecO. This is Recombination protein RecR from Cronobacter sakazakii (strain ATCC BAA-894) (Enterobacter sakazakii).